Here is a 554-residue protein sequence, read N- to C-terminus: Formate--tetrahydrofolate ligase (554 aa).

65-72 lines the ATP pocket; sequence TPLGEGKT.

The protein belongs to the formate--tetrahydrofolate ligase family.

It carries out the reaction (6S)-5,6,7,8-tetrahydrofolate + formate + ATP = (6R)-10-formyltetrahydrofolate + ADP + phosphate. The protein operates within one-carbon metabolism; tetrahydrofolate interconversion. This is Formate--tetrahydrofolate ligase from Aliivibrio salmonicida (strain LFI1238) (Vibrio salmonicida (strain LFI1238)).